The sequence spans 272 residues: 4-hydroxy-tetrahydrodipicolinate reductase (272 aa).

Residues 11-16 (GVSGRM) and glutamate 37 each bind NAD(+). Arginine 38 serves as a coordination point for NADP(+). Residues 101–103 (GTT) and 125–128 (AGNM) contribute to the NAD(+) site. Histidine 158 functions as the Proton donor/acceptor in the catalytic mechanism. Histidine 159 serves as a coordination point for (S)-2,3,4,5-tetrahydrodipicolinate. Residue lysine 162 is the Proton donor of the active site. Residue 168 to 169 (GT) coordinates (S)-2,3,4,5-tetrahydrodipicolinate.

This sequence belongs to the DapB family.

It is found in the cytoplasm. The catalysed reaction is (S)-2,3,4,5-tetrahydrodipicolinate + NAD(+) + H2O = (2S,4S)-4-hydroxy-2,3,4,5-tetrahydrodipicolinate + NADH + H(+). The enzyme catalyses (S)-2,3,4,5-tetrahydrodipicolinate + NADP(+) + H2O = (2S,4S)-4-hydroxy-2,3,4,5-tetrahydrodipicolinate + NADPH + H(+). It participates in amino-acid biosynthesis; L-lysine biosynthesis via DAP pathway; (S)-tetrahydrodipicolinate from L-aspartate: step 4/4. Its function is as follows. Catalyzes the conversion of 4-hydroxy-tetrahydrodipicolinate (HTPA) to tetrahydrodipicolinate. This Roseobacter denitrificans (strain ATCC 33942 / OCh 114) (Erythrobacter sp. (strain OCh 114)) protein is 4-hydroxy-tetrahydrodipicolinate reductase.